The following is a 165-amino-acid chain: Glucosamine 6-phosphate N-acetyltransferase (165 aa).

Positions 22-165 (FKVRPLAKDD…DDCNFMTQRF (144 aa)) constitute an N-acetyltransferase domain. Substrate-binding positions include T44, 92-95 (KFIH), and 104-106 (EDV). Residue 114–119 (RQKLGA) participates in acetyl-CoA binding. Residues 135 to 136 (YK) and R164 contribute to the substrate site.

Belongs to the acetyltransferase family. GNA1 subfamily.

It catalyses the reaction D-glucosamine 6-phosphate + acetyl-CoA = N-acetyl-D-glucosamine 6-phosphate + CoA + H(+). It functions in the pathway nucleotide-sugar biosynthesis; UDP-N-acetyl-alpha-D-glucosamine biosynthesis; N-acetyl-alpha-D-glucosamine 1-phosphate from alpha-D-glucosamine 6-phosphate (route I): step 1/2. The protein is Glucosamine 6-phosphate N-acetyltransferase (gna-1) of Caenorhabditis elegans.